The following is a 2699-amino-acid chain: UPF0648 protein C3H5.09c (2699 aa).

A glycan (N-linked (GlcNAc...) asparagine) is linked at Asn21. The chain crosses the membrane as a helical span at residues 24–44 (FVWVVIATGFLFHLVLFVLSY). N-linked (GlcNAc...) asparagine glycans are attached at residues Asn288, Asn293, Asn334, Asn345, Asn433, Asn507, Asn551, Asn655, Asn760, Asn993, Asn1000, Asn1003, Asn1006, and Asn1009. The tract at residues 975-1021 (KAKDPSPKSASESSSFYQNGSDIDDNDSNSSNTSNHTTENANAQQRK) is disordered. Residues 981-995 (PKSASESSSFYQNGS) are compositionally biased toward low complexity. Positions 1006 to 1033 (NTSNHTTENANAQQRKLEDLNRSFEDFL) form a coiled coil. Positions 1010-1019 (HTTENANAQQ) are enriched in polar residues. Asn1026, Asn1039, Asn1046, Asn1236, Asn1255, Asn1344, Asn1527, Asn1595, Asn1791, Asn1916, Asn2032, Asn2048, Asn2256, Asn2285, Asn2388, Asn2407, Asn2417, Asn2508, and Asn2622 each carry an N-linked (GlcNAc...) asparagine glycan. Positions 1758 to 1818 (QYELLQKRRK…TLSDHYRLLE (61 aa)) form a coiled coil. Positions 2393-2447 (FPHIYSRNHDKRKENGSQGEADNSNYSGSLMRRRTNDQEEDALATPSSSRRDSRS) are disordered. The span at 2408 to 2420 (GSQGEADNSNYSG) shows a compositional bias: polar residues. 2 disordered regions span residues 2606 to 2632 (AEENQEEGSPASAISRNHSTRSSLNSP) and 2647 to 2676 (ADIVKRHIPPTINGKRSKNKGNEGSNARVD). Polar residues predominate over residues 2617 to 2632 (SAISRNHSTRSSLNSP).

This sequence belongs to the UPF0648 family.

The protein resides in the membrane. This chain is UPF0648 protein C3H5.09c, found in Schizosaccharomyces pombe (strain 972 / ATCC 24843) (Fission yeast).